A 1082-amino-acid chain; its full sequence is RE1-silencing transcription factor (1082 aa).

The segment at 32 to 117 (DLHELSKAEL…SLELSAVEPQ (86 aa)) is interaction with SIN3A. An interaction with SIN3B region spans residues 43 to 57 (APQLIMLANVALTGE). Residues 140–413 (PVAEDKCRSS…KSKHPTCPSK (274 aa)) form an interaction with ZFP90 region. Residues 154-176 (FRCKPCQYEAESEEQFVHHIRIH) form a C2H2-type 1 zinc finger. The tract at residues 196-207 (SGSSPAEEGEFS) is required for binding to the neuron-restrictive silencer element. 7 consecutive C2H2-type zinc fingers follow at residues 211–235 (IRCDRCGYNTNRYDHYMAHLKHHLR), 243–265 (YKCIICTYTTVSEYHWRKHLRNH), 271–293 (YTCSKCNYFSDRKNNYVQHVRTH), 299–321 (YKCELCPYSSSQKTHLTRHMRTH), 327–350 (FKCDQCNYVASNQHEVTRHARQVH), 356–378 (LNCPHCDYKTADRSNFKKHVELH), and 384–407 (FNCPVCDYAASKKCNLQYHFKSKH). Disordered regions lie at residues 408–809 (PTCP…ELSL) and 831–1027 (SKLL…KAGL). Basic and acidic residues predominate over residues 440–475 (EKMENEQTKTKGDVSGKKNEKPVKAVGKDASKEKKP). A compositionally biased stretch (low complexity) spans 477-497 (SSVSVVQVTTRTRKSAVAAET). Residues 581–597 (KGTKKTPPKTKTSKKGG) are compositionally biased toward basic residues. Positions 630–640 (VTGSGSSQTEL) are enriched in polar residues. Pro residues-rich tracts occupy residues 684-713 (YPQPPQRGPAPPTGPAPPTGPAPPTEPAPP) and 729-751 (KEPPPSMEPPCPEELPQAEPPPM). 2 stretches are compositionally biased toward basic and acidic residues: residues 798 to 807 (LRKDRAEKEL) and 854 to 864 (NSREETPKDQE). Positions 900 to 909 (RVSSSEQNSA) are enriched in polar residues. Position 950 is a phosphoserine (serine 950). Residues 985-1063 (EGIHSHDGSD…HLNRHLVNVY (79 aa)) are interaction with RCOR1. The segment at 1036 to 1058 (FVCIFCDRSFRKEKDYSKHLNRH) adopts a C2H2-type 9 zinc-finger fold.

In terms of assembly, isoform 1 and isoform 2 form heterodimers. Isoform 2: Forms homodimers and homooligomers; binds to the neuron-restrictive silencer element (NRSE) as monomer. Interacts with SIN3A, SIN3B and RCOR1. Interacts with CDYL. Interacts with EHMT1 and EHMT2 only in the presence of CDYL. Part of a complex containing at least CDYL, REST, WIZ, SETB1, EHMT1 and EHMT2. Interacts (via zinc-finger DNA-binding domain) with ZFP90 (via N- and C-termini); the interaction inhibits REST repressor activity. Interacts (via C2H2-type zinc finger 5) with PRICKLE1. Interacts with FBXW11 and BTRC. Interacts with USP7. In terms of processing, O-glycosylated. Phosphorylated; phosphorylation is required for ubiquitination. Post-translationally, ubiquitinated; ubiquitination is mediated by BTRC and leads to proteasomal degradation in G2 phase. Ubiquitination increases during neuronal differentiation. Deubiquitinated by USP7; leading to its stabilization and promoting the maintenance of neural progenitor cells. As to expression, expressed in the hippocampus, including quiescent neuronal progenitor (QNP) cells, transient-amplifying progenitor (TAP) cells, neuroblasts and mature neurons (at protein level). Expressed in embryonic stem cells (at protein level). Expressed in many non-neuronal tissues including the heart and liver. Abundantly expressed in osteoblastic lineage cells. Expressed in the spleen, kidney, blood cells, cortex, neocortex and in the utricle, saccule and organ of Corti of the inner ear. Isoform 2: Expressed in the cortex, neocortex and in the utricle, saccule and organ of Corti of the inner ear.

Its subcellular location is the nucleus. It localises to the cytoplasm. Transcriptional repressor which binds neuron-restrictive silencer element (NRSE) and represses neuronal gene transcription in non-neuronal cells. Restricts the expression of neuronal genes by associating with two distinct corepressors, SIN3A and RCOR1, which in turn recruit histone deacetylase to the promoters of REST-regulated genes. Mediates repression by recruiting the BHC complex at RE1/NRSE sites which acts by deacetylating and demethylating specific sites on histones, thereby acting as a chromatin modifier. Transcriptional repression by REST-CDYL via the recruitment of histone methyltransferase EHMT2 may be important in transformation suppression. Represses the expression of SRRM4 in non-neural cells to prevent the activation of neural-specific splicing events and to prevent production of REST isoform 2. Repressor activity may be inhibited by forming heterodimers with isoform 2, thereby preventing binding to NRSE or binding to corepressors and leading to derepression of target genes. Also maintains repression of neuronal genes in neural stem cells, and allows transcription and differentiation into neurons by dissociation from RE1/NRSE sites of target genes. Thereby is involved in maintaining the quiescent state of adult neural stem cells and preventing premature differentiation into mature neurons. Plays a role in the developmental switch in synaptic NMDA receptor composition during postnatal development, by repressing GRIN2B expression and thereby altering NMDA receptor properties from containing primarily GRIN2B to primarily GRIN2A subunits. Acts as a regulator of osteoblast differentiation. Key repressor of gene expression in hypoxia; represses genes in hypoxia by direct binding to an RE1/NRSE site on their promoter regions. May also function in stress resistance in the brain during aging; possibly by regulating expression of genes involved in cell death and in the stress response. Repressor of gene expression in the hippocampus after ischemia by directly binding to RE1/NRSE sites and recruiting SIN3A and RCOR1 to promoters of target genes, thereby promoting changes in chromatin modifications and ischemia-induced cell death. After ischemia, might play a role in repression of miR-132 expression in hippocampal neurons, thereby leading to neuronal cell death. Its function is as follows. Binds to the 3' region of the neuron-restrictive silencer element (NRSE), with lower affinity than isoform 1. Exhibits weaker repressor activity compared to isoform 1. May negatively regulate the repressor activity of isoform 1 by binding to isoform 1, thereby preventing its binding to NRSE and leading to derepression of target genes. However, in another study, does not appear to be implicated in repressor activity of a NRSE motif-containing reporter construct nor in inhibitory activity on the isoform 1 transcriptional repressor activity. Post-transcriptional inactivation of REST by SRRM4-dependent alternative splicing into isoform 2 is required in mechanosensory hair cells in the inner ear for derepression of neuronal genes, maintenance of hair cells and hearing. The sequence is that of RE1-silencing transcription factor (Rest) from Mus musculus (Mouse).